We begin with the raw amino-acid sequence, 52 residues long: MNIGDVMFQLFVFIIFAAVVFAAVTGFKYAKNRKAQLDRIEKKLNSLSEDHD.

The chain crosses the membrane as a helical span at residues 7-27 (MFQLFVFIIFAAVVFAAVTGF).

The protein resides in the membrane. This is an uncharacterized protein from Bacillus subtilis (strain 168).